The following is a 349-amino-acid chain: Insulin gene enhancer protein ISL-1 (349 aa).

2 consecutive LIM zinc-binding domains span residues 17–70 and 79–133; these read CVGC…CKRD and CAKC…RADH. A DNA-binding region (homeobox) is located at residues 181–240; that stretch reads TTRVRTVLNEKQLHTLRTCYAANPRPDALMKEQLVEMTGLSPRVIRVWFQNKRCKDKKRS. Positions 312–349 are disordered; sequence VNFSEGGPGSNSTGSEVASMSSQLPDTPNSMVASPIEA. The span at 321–343 shows a compositional bias: polar residues; it reads SNSTGSEVASMSSQLPDTPNSMV.

It localises to the nucleus. Its function is as follows. Acts as a transcriptional regulator. Recognizes and binds to the consensus octamer binding site 5'-ATAATTAA-3' in promoter of target genes. Plays a fundamental role in the gene regulatory network essential for retinal ganglion cell (RGC) differentiation. Binds to insulin gene enhancer sequences. Defines subclasses of motoneurons that segregate into columns in the spinal cord and select distinct axon pathways. Acts in conjunction with LHX1, LHX3 and ISL2. Binds to insulin gene enhancer sequences. Essential for heart development. The chain is Insulin gene enhancer protein ISL-1 (ISL1) from Gallus gallus (Chicken).